The chain runs to 230 residues: Oxaloacetate tautomerase FAHD1, mitochondrial (230 aa).

The transit peptide at M1 to Y26 directs the protein to the mitochondrion. Mg(2+) contacts are provided by E73, E75, and D104.

This sequence belongs to the FAH family. Mg(2+) serves as cofactor. The cofactor is Mn(2+).

It is found in the mitochondrion. It catalyses the reaction oxaloacetate = enol-oxaloacetate. In terms of biological role, tautomerase that converts enol-oxaloacetate, a strong inhibitor of succinate dehydrogenase, to the physiological keto form of oxaloacetate. The protein is Oxaloacetate tautomerase FAHD1, mitochondrial of Oryza sativa subsp. japonica (Rice).